The following is a 152-amino-acid chain: Transcriptional repressor NrdR (152 aa).

A zinc finger lies at Cys3–Cys34. The ATP-cone domain occupies Pro49–Glu139.

The protein belongs to the NrdR family. Zn(2+) serves as cofactor.

Its function is as follows. Negatively regulates transcription of bacterial ribonucleotide reductase nrd genes and operons by binding to NrdR-boxes. The sequence is that of Transcriptional repressor NrdR from Laribacter hongkongensis (strain HLHK9).